A 339-amino-acid chain; its full sequence is Uroporphyrinogen decarboxylase (339 aa).

Substrate contacts are provided by residues 21–25 (RQAGR), Asp71, Tyr147, Ser202, and His315.

This sequence belongs to the uroporphyrinogen decarboxylase family. As to quaternary structure, homodimer.

It localises to the cytoplasm. The enzyme catalyses uroporphyrinogen III + 4 H(+) = coproporphyrinogen III + 4 CO2. The protein operates within porphyrin-containing compound metabolism; protoporphyrin-IX biosynthesis; coproporphyrinogen-III from 5-aminolevulinate: step 4/4. In terms of biological role, catalyzes the decarboxylation of four acetate groups of uroporphyrinogen-III to yield coproporphyrinogen-III. The polypeptide is Uroporphyrinogen decarboxylase (Helicobacter pylori (strain HPAG1)).